The primary structure comprises 613 residues: Laccase 1 (613 aa).

An N-terminal signal peptide occupies residues Met1–Ala20. Plastocyanin-like domains are found at residues Ile29–Lys142 and Tyr171–Pro359. The N-linked (GlcNAc...) asparagine glycan is linked to Asn74. Residues His78, His80, His122, and His124 each coordinate Cu cation. Residues Asn256, Asn279, Asn444, Asn468, and Asn484 are each glycosylated (N-linked (GlcNAc...) asparagine). The Plastocyanin-like 3 domain occupies Asn468–Gly598. Residues His506, His509, and His511 each coordinate Cu cation. N-linked (GlcNAc...) asparagine glycosylation occurs at Asn526. His580, Cys581, His582, and His586 together coordinate Cu cation.

It belongs to the multicopper oxidase family. It depends on Cu cation as a cofactor.

Its subcellular location is the cell surface. It functions in the pathway pigment biosynthesis. In terms of biological role, laccase; part of the Pks1 gene cluster that mediates the biosynthesis of an anthraquinone derivative pigment that contributes to conidial pigmentation that provides protection from UV radiation, heat and cold stress. The polyketide synthase Pks1 produces 1-acetyl-2,4,6,8-tetrahydroxy-9,10-anthraquinone though condensation of acetyl-CoA with malonyl-CoA. The dehydratase EthD and the laccase Mlac1 further convert the anthraquinone derivative into the final conidial pigment. This chain is Laccase 1, found in Metarhizium robertsii (strain ARSEF 23 / ATCC MYA-3075) (Metarhizium anisopliae (strain ARSEF 23)).